The sequence spans 614 residues: 1-deoxy-D-xylulose-5-phosphate synthase (614 aa).

Thiamine diphosphate is bound by residues H74 and 115-117; that span reads GHS. D146 serves as a coordination point for Mg(2+). Thiamine diphosphate contacts are provided by residues 147–148, N175, Y282, and E363; that span reads GA. N175 provides a ligand contact to Mg(2+).

It belongs to the transketolase family. DXPS subfamily. Homodimer. Mg(2+) is required as a cofactor. The cofactor is thiamine diphosphate.

It catalyses the reaction D-glyceraldehyde 3-phosphate + pyruvate + H(+) = 1-deoxy-D-xylulose 5-phosphate + CO2. Its pathway is metabolic intermediate biosynthesis; 1-deoxy-D-xylulose 5-phosphate biosynthesis; 1-deoxy-D-xylulose 5-phosphate from D-glyceraldehyde 3-phosphate and pyruvate: step 1/1. Its function is as follows. Catalyzes the acyloin condensation reaction between C atoms 2 and 3 of pyruvate and glyceraldehyde 3-phosphate to yield 1-deoxy-D-xylulose-5-phosphate (DXP). In Methylobacillus flagellatus (strain ATCC 51484 / DSM 6875 / VKM B-1610 / KT), this protein is 1-deoxy-D-xylulose-5-phosphate synthase.